A 55-amino-acid chain; its full sequence is ATP synthase F(0) complex subunit 8 (55 aa).

Residues 9-29 form a helical membrane-spanning segment; sequence WFAIMVFSWFVFLIFLPPKIM.

Belongs to the ATPase protein 8 family. Component of the ATP synthase complex composed at least of ATP5F1A/subunit alpha, ATP5F1B/subunit beta, ATP5MC1/subunit c (homooctomer), MT-ATP6/subunit a, MT-ATP8/subunit 8, ATP5ME/subunit e, ATP5MF/subunit f, ATP5MG/subunit g, ATP5MK/subunit k, ATP5MJ/subunit j, ATP5F1C/subunit gamma, ATP5F1D/subunit delta, ATP5F1E/subunit epsilon, ATP5PF/subunit F6, ATP5PB/subunit b, ATP5PD/subunit d, ATP5PO/subunit OSCP. ATP synthase complex consists of a soluble F(1) head domain (subunits alpha(3) and beta(3)) - the catalytic core - and a membrane F(0) domain - the membrane proton channel (subunits c, a, 8, e, f, g, k and j). These two domains are linked by a central stalk (subunits gamma, delta, and epsilon) rotating inside the F1 region and a stationary peripheral stalk (subunits F6, b, d, and OSCP).

The protein localises to the mitochondrion membrane. Functionally, subunit 8, of the mitochondrial membrane ATP synthase complex (F(1)F(0) ATP synthase or Complex V) that produces ATP from ADP in the presence of a proton gradient across the membrane which is generated by electron transport complexes of the respiratory chain. ATP synthase complex consist of a soluble F(1) head domain - the catalytic core - and a membrane F(1) domain - the membrane proton channel. These two domains are linked by a central stalk rotating inside the F(1) region and a stationary peripheral stalk. During catalysis, ATP synthesis in the catalytic domain of F(1) is coupled via a rotary mechanism of the central stalk subunits to proton translocation. In vivo, can only synthesize ATP although its ATP hydrolase activity can be activated artificially in vitro. Part of the complex F(0) domain. The sequence is that of ATP synthase F(0) complex subunit 8 from Tetraodon nigroviridis (Spotted green pufferfish).